A 717-amino-acid polypeptide reads, in one-letter code: Glycine--tRNA ligase beta subunit (717 aa).

The protein belongs to the class-II aminoacyl-tRNA synthetase family. In terms of assembly, tetramer of two alpha and two beta subunits.

The protein resides in the cytoplasm. The catalysed reaction is tRNA(Gly) + glycine + ATP = glycyl-tRNA(Gly) + AMP + diphosphate. The chain is Glycine--tRNA ligase beta subunit from Gloeothece citriformis (strain PCC 7424) (Cyanothece sp. (strain PCC 7424)).